We begin with the raw amino-acid sequence, 1076 residues long: Zinc-regulated protein 8 (1076 aa).

Residues 1–11 are compositionally biased toward basic residues; that stretch reads MRSFIKAHKKS. 4 disordered regions span residues 1-66, 85-162, 190-223, and 234-253; these read MRSF…PGFE, SNLN…RTTD, PASP…TSPS, and KNKG…SSKK. Residues 23–34 are compositionally biased toward polar residues; sequence NFSGNTNNSSQR. Residues 93 to 106 are compositionally biased toward low complexity; that stretch reads STPTTSTNQTTSNS. The span at 107 to 117 shows a compositional bias: polar residues; it reads FVLQNPPTKNT. Residues 118–128 show a composition bias toward pro residues; that stretch reads GPPPPLPPPLF. Polar residues-rich tracts occupy residues 193 to 206 and 214 to 223; these read PASN…SKQF and ENLTSTTSPS. Phosphoserine is present on residues S275 and S354. Disordered regions lie at residues 357-450, 534-557, and 566-585; these read IRHG…DDES, LSDD…ESDN, and GKET…SLGE. The span at 362 to 378 shows a compositional bias: polar residues; sequence LQSSPSKVNKNDSQNET. S403 and S407 each carry phosphoserine. Residues 408-418 are compositionally biased toward basic and acidic residues; that stretch reads VNEKETHKAND. The segment covering 419–450 has biased composition (acidic residues); the sequence is CNDESSENGDGDNDHDDDYDDDDDDDDDDDES. Over residues 576–585 the composition is skewed to basic and acidic residues; that stretch reads GHHDDASLGE. 2 positions are modified to phosphoserine: S632 and S676. Disordered stretches follow at residues 658–701, 713–762, 909–931, 1000–1020, and 1042–1076; these read NIIR…KPTV, SASD…PHSQ, RRTL…FSSV, HNVG…QISN, and PTNS…PKRA. Polar residues-rich tracts occupy residues 690 to 701 and 739 to 748; these read LTGTTGSTKPTV and QVSLQSSLYE.

Belongs to the ZRG8 family. Interacts with BUD27, GIS1 and SSD1.

The protein resides in the cytoplasm. Its subcellular location is the bud. It is found in the bud neck. It localises to the bud tip. Involved in the integrity functions of RAM, a conserved signaling network that regulates maintenance of polarized growth and daughter-cell-specific transcription. This Saccharomyces cerevisiae (strain ATCC 204508 / S288c) (Baker's yeast) protein is Zinc-regulated protein 8 (ZRG8).